The following is a 418-amino-acid chain: Gamma-glutamyl phosphate reductase (418 aa).

This sequence belongs to the gamma-glutamyl phosphate reductase family.

It localises to the cytoplasm. The enzyme catalyses L-glutamate 5-semialdehyde + phosphate + NADP(+) = L-glutamyl 5-phosphate + NADPH + H(+). The protein operates within amino-acid biosynthesis; L-proline biosynthesis; L-glutamate 5-semialdehyde from L-glutamate: step 2/2. Its function is as follows. Catalyzes the NADPH-dependent reduction of L-glutamate 5-phosphate into L-glutamate 5-semialdehyde and phosphate. The product spontaneously undergoes cyclization to form 1-pyrroline-5-carboxylate. This Parafrankia sp. (strain EAN1pec) protein is Gamma-glutamyl phosphate reductase.